Here is a 279-residue protein sequence, read N- to C-terminus: MEFWKLQGSGNDFVVIDDRDEKLESFLKERGVSKEDFVRKVCAFHTGVGADGLILIKNPDNPENDFKWEFFNSDGSVAEMCGNGSRCAVRFAYERGIVGNKVRFETLAGVIKAEVYENGRKVKVQLTPPSKPEEKTLTVDGEEVIGVFINTGVPHFVVPVEDVEKVNVIKLGRAIRFHEEFQPKGTNVNFVQPVSEDTIKVRTYERGVESETLACGTGATACAIVSYLKGLVKKKPVNVLTRSGEVLTIDFSEDLKEVFLTGSVYKVFEGRLSEEVLEY.

Positions 11 and 72 each coordinate substrate. Cys81 serves as the catalytic Proton donor. Substrate contacts are provided by residues 82-83 (GN), Asn187, and 205-206 (ER). Catalysis depends on Cys215, which acts as the Proton acceptor. 216–217 (GT) lines the substrate pocket.

This sequence belongs to the diaminopimelate epimerase family. In terms of assembly, homodimer.

The protein localises to the cytoplasm. It carries out the reaction (2S,6S)-2,6-diaminopimelate = meso-2,6-diaminopimelate. The protein operates within amino-acid biosynthesis; L-lysine biosynthesis via DAP pathway; DL-2,6-diaminopimelate from LL-2,6-diaminopimelate: step 1/1. Functionally, catalyzes the stereoinversion of LL-2,6-diaminopimelate (L,L-DAP) to meso-diaminopimelate (meso-DAP), a precursor of L-lysine and an essential component of the bacterial peptidoglycan. In Aquifex aeolicus (strain VF5), this protein is Diaminopimelate epimerase.